A 508-amino-acid chain; its full sequence is Cytochrome P450 monooxygenase pkfB (508 aa).

A helical transmembrane segment spans residues 9 to 29 (FSLGLSQILVCLALLYAAIHI). Asn57 and Asn305 each carry an N-linked (GlcNAc...) asparagine glycan. A heme-binding site is contributed by Cys450.

The protein belongs to the cytochrome P450 family. It depends on heme as a cofactor.

The protein resides in the membrane. It participates in secondary metabolite biosynthesis. In terms of biological role, cytochrome P450 monooxygenase; part of the gene cluster that mediates the biosynthesis of aspernidine A, a prenylated isoindolinone. The starting point of the biosynthesis of aspernidin A is the production of orsellinaldehyde by the non-reducing polyketide synthase pkfA. Hydroxylation, methylation of one of the phenol groups, and prenylation, presumably catalyzed by the prenyltransferase pkfE, would be needed to yield aspernidine D. Subsequently, the cytochrome P450 monooxygenase pkfB is responsible for hydroxylation of aspernidine D to yield aspernidine E. The dehydrogenase pkfF may be responsible for further oxidation of aspernidine E to form a dialdehyde intermediate which is further transformed in a series of steps, some of which are enzyme-mediated, to generate aspernidine A. The possibility that additional enzymes outside of the cluster are involved in aspernidine A biosynthesis cannot be excluded. The chain is Cytochrome P450 monooxygenase pkfB from Emericella nidulans (strain FGSC A4 / ATCC 38163 / CBS 112.46 / NRRL 194 / M139) (Aspergillus nidulans).